The sequence spans 107 residues: uncharacterized protein (107 aa).

The Cytoplasmic portion of the chain corresponds to 1–4 (MSLV). The helical transmembrane segment at 5–25 (IDIADTIVSLTALIGLIITLI) threads the bilayer. At 26-107 (KFHSQNKEDA…ELCRSSDRSK (82 aa)) the chain is on the extracellular side.

Its subcellular location is the host membrane. This is an uncharacterized protein from Acidianus sp. F28 (AFV-2).